Reading from the N-terminus, the 1486-residue chain is Chromosome partition protein MukB (1486 aa).

Residue G34–S41 participates in ATP binding. Coiled-coil stretches lie at residues L326–Q418, L444–Q480, and R509–V603. A flexible hinge region spans residues P666–R783. Coiled-coil stretches lie at residues E835–E923, E977–A1115, and V1209–S1266.

It belongs to the SMC family. MukB subfamily. As to quaternary structure, homodimerization via its hinge domain. Binds to DNA via its C-terminal region. Interacts, and probably forms a ternary complex, with MukE and MukF via its C-terminal region. The complex formation is stimulated by calcium or magnesium. Interacts with tubulin-related protein FtsZ.

The protein resides in the cytoplasm. Its subcellular location is the nucleoid. Its function is as follows. Plays a central role in chromosome condensation, segregation and cell cycle progression. Functions as a homodimer, which is essential for chromosome partition. Involved in negative DNA supercoiling in vivo, and by this means organize and compact chromosomes. May achieve or facilitate chromosome segregation by condensation DNA from both sides of a centrally located replisome during cell division. This chain is Chromosome partition protein MukB, found in Escherichia coli (strain SMS-3-5 / SECEC).